The primary structure comprises 1029 residues: E3 ubiquitin-protein ligase UPL6 (1029 aa).

The tract at residues 1–20 (MFFSGDPSTRKRVDLGGRST) is disordered. Positions 8–20 (STRKRVDLGGRST) are enriched in basic and acidic residues. An IQ domain is found at 45–74 (QNSAALKIQKFFRGRRSMAIERSKVRHDFC). One can recognise an HECT domain in the interval 688–1029 (SEDDLRSSIR…ISAEAGFDLS (342 aa)). Cysteine 997 acts as the Glycyl thioester intermediate in catalysis.

Belongs to the UPL family.

It catalyses the reaction S-ubiquitinyl-[E2 ubiquitin-conjugating enzyme]-L-cysteine + [acceptor protein]-L-lysine = [E2 ubiquitin-conjugating enzyme]-L-cysteine + N(6)-ubiquitinyl-[acceptor protein]-L-lysine.. Its pathway is protein modification; protein ubiquitination. Probable E3 ubiquitin-protein ligase which mediates ubiquitination and subsequent proteasomal degradation of target proteins. This Arabidopsis thaliana (Mouse-ear cress) protein is E3 ubiquitin-protein ligase UPL6 (UPL6).